The following is a 326-amino-acid chain: Pantothenate kinase (326 aa).

Residue 104 to 111 (GSVAVGKS) coordinates ATP.

The protein belongs to the prokaryotic pantothenate kinase family.

It is found in the cytoplasm. It carries out the reaction (R)-pantothenate + ATP = (R)-4'-phosphopantothenate + ADP + H(+). It functions in the pathway cofactor biosynthesis; coenzyme A biosynthesis; CoA from (R)-pantothenate: step 1/5. The chain is Pantothenate kinase from Parvibaculum lavamentivorans (strain DS-1 / DSM 13023 / NCIMB 13966).